Here is a 315-residue protein sequence, read N- to C-terminus: MKHLVIATRGSKLALWQAEHIKSLIETEHAGKVDVSLKIIKTKGDIILDVPLAKVGGKGLFVKEIEEALLDGSADLAVHSMKDVPMELPEGLFLGCIPEREEPSDTLLSVRYASLDALPHGARVGTSSLRRQSQLLALRPDLDIISLRGNVDTRLRKLMDGEFDAIVMATAGLKRLGLSAPHHEVLAPPRFLPAVGQGALGIEFREDRADLRDMLAFLDHRPTRIRVEAERGFLAGLEGGCQVPIAGHAVMTGDDDFRIEGLVADLKGERVIRRTLEGTGANARNRGLELASQVLADGAAEILDEVYASGAADRQ.

The residue at position 241 (C241) is an S-(dipyrrolylmethanemethyl)cysteine.

Belongs to the HMBS family. In terms of assembly, monomer. Dipyrromethane serves as cofactor.

The enzyme catalyses 4 porphobilinogen + H2O = hydroxymethylbilane + 4 NH4(+). It participates in porphyrin-containing compound metabolism; protoporphyrin-IX biosynthesis; coproporphyrinogen-III from 5-aminolevulinate: step 2/4. Functionally, tetrapolymerization of the monopyrrole PBG into the hydroxymethylbilane pre-uroporphyrinogen in several discrete steps. In Nitratidesulfovibrio vulgaris (strain DP4) (Desulfovibrio vulgaris), this protein is Porphobilinogen deaminase.